We begin with the raw amino-acid sequence, 814 residues long: DNA replication licensing factor Mcm6 (814 aa).

A C4-type zinc finger spans residues 152-179; the sequence is CLDCQTEIRDVEQQFKFTNPTICRNPVC. The region spanning 339-545 is the MCM domain; it reads LYQNLINSLF…VVDYAIARKI (207 aa). ATP contacts are provided by Ser392, Thr393, Ala394, Lys395, Ser396, and Asn497. Residues 521 to 524 carry the Arginine finger motif; it reads SRFD. ADP contacts are provided by Arg612 and Glu615. Residues 656–696 form a disordered region; it reads DIHLDEEEGEENENVMDIGEETPEDTPRTNETEENDQDTPA. Residues 659-679 show a composition bias toward acidic residues; that stretch reads LDEEEGEENENVMDIGEETPE.

This sequence belongs to the MCM family. In terms of assembly, component of the Mcm2-7 complex. The complex forms a toroidal hexameric ring with the proposed subunit order Mcm2-Mcm6-Mcm4-Mcm7-Mcm3-Mcm5 (By simililarity). The heterodimers of Mcm4/Mcm6 and Mcm3/Mcm5 interact with Mcm2 and Mcm7.

The protein resides in the nucleus. The enzyme catalyses ATP + H2O = ADP + phosphate + H(+). Its function is as follows. Acts as a component of the MCM2-7 complex (MCM complex) which is the replicative helicase essential for 'once per cell cycle' DNA replication initiation and elongation in eukaryotic cells. Core component of CDC45-MCM-GINS (CMG) helicase, the molecular machine that unwinds template DNA during replication, and around which the replisome is built. The active ATPase sites in the MCM2-7 ring are formed through the interaction surfaces of two neighboring subunits such that a critical structure of a conserved arginine finger motif is provided in trans relative to the ATP-binding site of the Walker A box of the adjacent subunit. The six ATPase active sites, however, are likely to contribute differentially to the complex helicase activity. The polypeptide is DNA replication licensing factor Mcm6 (Anopheles gambiae (African malaria mosquito)).